The chain runs to 153 residues: uncharacterized protein (153 aa).

The protein to M.jannaschii MJ1183.

This is an uncharacterized protein from Methanothermobacter thermautotrophicus (strain ATCC 29096 / DSM 1053 / JCM 10044 / NBRC 100330 / Delta H) (Methanobacterium thermoautotrophicum).